The following is a 167-amino-acid chain: Leptin (167 aa).

The signal sequence occupies residues M1–A21. An intrachain disulfide couples C117 to C167.

This sequence belongs to the leptin family.

The protein resides in the secreted. Functionally, key player in the regulation of energy balance and body weight control. Once released into the circulation, has central and peripheral effects by binding LEPR, found in many tissues, which results in the activation of several major signaling pathways. In the hypothalamus, acts as an appetite-regulating factor that induces a decrease in food intake and an increase in energy consumption by inducing anorexinogenic factors and suppressing orexigenic neuropeptides, also regulates bone mass and secretion of hypothalamo-pituitary-adrenal hormones. In the periphery, increases basal metabolism, influences reproductive function, regulates pancreatic beta-cell function and insulin secretion, is pro-angiogenic for endothelial cell and affects innate and adaptive immunity. In the arcuate nucleus of the hypothalamus, activates by depolarization POMC neurons inducing FOS and SOCS3 expression to release anorexigenic peptides and inhibits by hyperpolarization NPY neurons inducing SOCS3 with a consequent reduction on release of orexigenic peptides. In addition to its known satiety inducing effect, has a modulatory role in nutrient absorption. In the intestine, reduces glucose absorption by enterocytes by activating PKC and leading to a sequential activation of p38, PI3K and ERK signaling pathways which exerts an inhibitory effect on glucose absorption. Acts as a growth factor on certain tissues, through the activation of different signaling pathways increases expression of genes involved in cell cycle regulation such as CCND1, via JAK2-STAT3 pathway, or VEGFA, via MAPK1/3 and PI3K-AKT1 pathways. May also play an apoptotic role via JAK2-STAT3 pathway and up-regulation of BIRC5 expression. Pro-angiogenic, has mitogenic activity on vascular endothelial cells and plays a role in matrix remodeling by regulating the expression of matrix metalloproteinases (MMPs) and tissue inhibitors of metalloproteinases (TIMPs). In innate immunity, modulates the activity and function of neutrophils by increasing chemotaxis and the secretion of oxygen radicals. Increases phagocytosis by macrophages and enhances secretion of pro-inflammatory mediators. Increases cytotoxic ability of NK cells. Plays a pro-inflammatory role, in synergy with IL1B, by inducing NOS2 which promotes the production of IL6, IL8 and Prostaglandin E2, through a signaling pathway that involves JAK2, PI3K, MAP2K1/MEK1 and MAPK14/p38. In adaptive immunity, promotes the switch of memory T-cells towards T helper-1 cell immune responses. Increases CD4(+)CD25(-) T-cell proliferation and reduces autophagy during TCR (T-cell receptor) stimulation, through MTOR signaling pathway activation and BCL2 up-regulation. This is Leptin (LEP) from Ursus thibetanus (Asiatic black bear).